The chain runs to 359 residues: tRNA N6-adenosine threonylcarbamoyltransferase (359 aa).

Residues histidine 115 and histidine 119 each coordinate Fe cation. Substrate-binding positions include 137–141, aspartate 170, glycine 183, and asparagine 283; that span reads LVSGG. Aspartate 311 lines the Fe cation pocket. Residues 328-359 are disordered; the sequence is APDSLDIAPRSRWPLDEKSAPVFGTGRRGAKA.

Belongs to the KAE1 / TsaD family. Requires Fe(2+) as cofactor.

The protein localises to the cytoplasm. The enzyme catalyses L-threonylcarbamoyladenylate + adenosine(37) in tRNA = N(6)-L-threonylcarbamoyladenosine(37) in tRNA + AMP + H(+). Functionally, required for the formation of a threonylcarbamoyl group on adenosine at position 37 (t(6)A37) in tRNAs that read codons beginning with adenine. Is involved in the transfer of the threonylcarbamoyl moiety of threonylcarbamoyl-AMP (TC-AMP) to the N6 group of A37, together with TsaE and TsaB. TsaD likely plays a direct catalytic role in this reaction. This is tRNA N6-adenosine threonylcarbamoyltransferase from Brucella abortus (strain S19).